We begin with the raw amino-acid sequence, 79 residues long: Small ribosomal subunit protein uS17 (79 aa).

It belongs to the universal ribosomal protein uS17 family. Part of the 30S ribosomal subunit.

Functionally, one of the primary rRNA binding proteins, it binds specifically to the 5'-end of 16S ribosomal RNA. In Rhizobium johnstonii (strain DSM 114642 / LMG 32736 / 3841) (Rhizobium leguminosarum bv. viciae), this protein is Small ribosomal subunit protein uS17.